An 86-amino-acid chain; its full sequence is Large ribosomal subunit protein bL27c (86 aa).

The segment at 1-27 (MAHKKGSGSTRNGRDSNSKRLGVKKYG) is disordered.

Belongs to the bacterial ribosomal protein bL27 family.

The protein resides in the plastid. The protein localises to the chloroplast. The polypeptide is Large ribosomal subunit protein bL27c (rpl27) (Porphyra purpurea (Red seaweed)).